Reading from the N-terminus, the 89-residue chain is Small ribosomal subunit protein uS15 (89 aa).

It belongs to the universal ribosomal protein uS15 family. In terms of assembly, part of the 30S ribosomal subunit. Forms a bridge to the 50S subunit in the 70S ribosome, contacting the 23S rRNA.

One of the primary rRNA binding proteins, it binds directly to 16S rRNA where it helps nucleate assembly of the platform of the 30S subunit by binding and bridging several RNA helices of the 16S rRNA. In terms of biological role, forms an intersubunit bridge (bridge B4) with the 23S rRNA of the 50S subunit in the ribosome. In Histophilus somni (strain 129Pt) (Haemophilus somnus), this protein is Small ribosomal subunit protein uS15.